The sequence spans 75 residues: Cytochrome c oxidase subunit 6C (75 aa).

The Mitochondrial matrix portion of the chain corresponds to 1–13 (MAPEVLPKPRMRG). A helical membrane pass occupies residues 14 to 54 (LLARRLRNHMAVAFVLSLGVAALYKFRVADQRKKAYADFYR). The Mitochondrial intermembrane segment spans residues 55–75 (NYDVMKDFEEMRKAGIFQSVK).

It belongs to the cytochrome c oxidase subunit 6c family. As to quaternary structure, component of the cytochrome c oxidase (complex IV, CIV), a multisubunit enzyme composed of 14 subunits. The complex is composed of a catalytic core of 3 subunits MT-CO1, MT-CO2 and MT-CO3, encoded in the mitochondrial DNA, and 11 supernumerary subunits COX4I1 (or COX4I2), COX5A, COX5B, COX6A1 (or COX6A2), COX6B1 (or COX6B2), COX6C, COX7A2 (or COX7A1), COX7B, COX7C, COX8A and NDUFA4, which are encoded in the nuclear genome. The complex exists as a monomer or a dimer and forms supercomplexes (SCs) in the inner mitochondrial membrane with NADH-ubiquinone oxidoreductase (complex I, CI) and ubiquinol-cytochrome c oxidoreductase (cytochrome b-c1 complex, complex III, CIII), resulting in different assemblies (supercomplex SCI(1)III(2)IV(1) and megacomplex MCI(2)III(2)IV(2)).

It localises to the mitochondrion inner membrane. It participates in energy metabolism; oxidative phosphorylation. In terms of biological role, component of the cytochrome c oxidase, the last enzyme in the mitochondrial electron transport chain which drives oxidative phosphorylation. The respiratory chain contains 3 multisubunit complexes succinate dehydrogenase (complex II, CII), ubiquinol-cytochrome c oxidoreductase (cytochrome b-c1 complex, complex III, CIII) and cytochrome c oxidase (complex IV, CIV), that cooperate to transfer electrons derived from NADH and succinate to molecular oxygen, creating an electrochemical gradient over the inner membrane that drives transmembrane transport and the ATP synthase. Cytochrome c oxidase is the component of the respiratory chain that catalyzes the reduction of oxygen to water. Electrons originating from reduced cytochrome c in the intermembrane space (IMS) are transferred via the dinuclear copper A center (CU(A)) of subunit 2 and heme A of subunit 1 to the active site in subunit 1, a binuclear center (BNC) formed by heme A3 and copper B (CU(B)). The BNC reduces molecular oxygen to 2 water molecules using 4 electrons from cytochrome c in the IMS and 4 protons from the mitochondrial matrix. The chain is Cytochrome c oxidase subunit 6C (COX6C) from Homo sapiens (Human).